The sequence spans 284 residues: Quinate/shikimate dehydrogenase (NAD(+)) (284 aa).

Ser18 and Thr70 together coordinate shikimate. L-quinate is bound by residues 18–20 and Thr70; that span reads SRT. Tyr73 functions as the Proton acceptor in the catalytic mechanism. Residues Lys74, Asn95, and Asp111 each contribute to the shikimate site. Residues Lys74, Asn95, and Asp111 each contribute to the L-quinate site. NAD(+) is bound by residues 137–138, Asp159, Arg164, 203–206, Ala214, Val229, and Gly252; these read GG and TPMG. Gln259 is a binding site for shikimate. Gln259 is a binding site for L-quinate.

The protein belongs to the shikimate dehydrogenase family. As to quaternary structure, homodimer.

It catalyses the reaction L-quinate + NAD(+) = 3-dehydroquinate + NADH + H(+). The enzyme catalyses shikimate + NAD(+) = 3-dehydroshikimate + NADH + H(+). Its pathway is metabolic intermediate biosynthesis; chorismate biosynthesis; chorismate from D-erythrose 4-phosphate and phosphoenolpyruvate: step 4/7. The protein operates within aromatic compound metabolism; 3,4-dihydroxybenzoate biosynthesis; 3-dehydroquinate from D-quinate (NAD(+) route). Involved in the biosynthesis of the chorismate, which leads to the biosynthesis of aromatic amino acids, and plays a key role in the quinate degradation pathway. Catalyzes the NAD(+)-dependent oxidation of both quinate and shikimate to 3-dehydroquinate and 3-dehydroshikimate, respectively. It can only use NAD. The chain is Quinate/shikimate dehydrogenase (NAD(+)) from Corynebacterium efficiens (strain DSM 44549 / YS-314 / AJ 12310 / JCM 11189 / NBRC 100395).